The primary structure comprises 285 residues: Acetyl-coenzyme A carboxylase carboxyl transferase subunit beta (285 aa).

The CoA carboxyltransferase N-terminal domain occupies 23 to 285; sequence VFRRCDGCSH…HLTAGRRARR (263 aa). Zn(2+) is bound by residues Cys-27, Cys-30, Cys-46, and Cys-49. The C4-type zinc-finger motif lies at 27–49; it reads CDGCSHTHDAAELARTFEVCSQC.

This sequence belongs to the AccD/PCCB family. Acetyl-CoA carboxylase is a heterohexamer composed of biotin carboxyl carrier protein (AccB), biotin carboxylase (AccC) and two subunits each of ACCase subunit alpha (AccA) and ACCase subunit beta (AccD). The cofactor is Zn(2+).

It localises to the cytoplasm. It carries out the reaction N(6)-carboxybiotinyl-L-lysyl-[protein] + acetyl-CoA = N(6)-biotinyl-L-lysyl-[protein] + malonyl-CoA. Its pathway is lipid metabolism; malonyl-CoA biosynthesis; malonyl-CoA from acetyl-CoA: step 1/1. Functionally, component of the acetyl coenzyme A carboxylase (ACC) complex. Biotin carboxylase (BC) catalyzes the carboxylation of biotin on its carrier protein (BCCP) and then the CO(2) group is transferred by the transcarboxylase to acetyl-CoA to form malonyl-CoA. The polypeptide is Acetyl-coenzyme A carboxylase carboxyl transferase subunit beta (Sorangium cellulosum (strain So ce56) (Polyangium cellulosum (strain So ce56))).